A 305-amino-acid chain; its full sequence is Small ribosomal subunit protein bS1B (305 aa).

S1 motif domains are found at residues 29-98 (GQTV…LSRR), 116-180 (GKTL…LTQR), and 194-262 (GNIY…LSTR).

It belongs to the bacterial ribosomal protein bS1 family.

In terms of biological role, binds mRNA. The protein is Small ribosomal subunit protein bS1B (rps1b) of Synechocystis sp. (strain ATCC 27184 / PCC 6803 / Kazusa).